The chain runs to 80 residues: Translation initiation factor IF-1, chloroplastic (80 aa).

The region spanning 1 to 74 (MKEQKWIHEG…TRGRIIYRLR (74 aa)) is the S1-like domain.

Belongs to the IF-1 family. As to quaternary structure, component of the 30S ribosomal translation pre-initiation complex which assembles on the 30S ribosome in the order IF-2 and IF-3, IF-1 and N-formylmethionyl-tRNA(fMet); mRNA recruitment can occur at any time during PIC assembly.

The protein localises to the plastid. The protein resides in the chloroplast. Its function is as follows. One of the essential components for the initiation of protein synthesis. Stabilizes the binding of IF-2 and IF-3 on the 30S subunit to which N-formylmethionyl-tRNA(fMet) subsequently binds. Helps modulate mRNA selection, yielding the 30S pre-initiation complex (PIC). Upon addition of the 50S ribosomal subunit IF-1, IF-2 and IF-3 are released leaving the mature 70S translation initiation complex. This chain is Translation initiation factor IF-1, chloroplastic, found in Illicium oligandrum (Star anise).